A 302-amino-acid polypeptide reads, in one-letter code: Ornithine carbamoyltransferase (302 aa).

Residues 52 to 55 (STRT), Gln79, Arg103, and 130 to 133 (HPCQ) each bind carbamoyl phosphate. L-ornithine is bound by residues Asn161, Asp221, and 225-226 (SM). Residues 261–262 (CL) and Arg289 contribute to the carbamoyl phosphate site.

Belongs to the aspartate/ornithine carbamoyltransferase superfamily. OTCase family.

It is found in the cytoplasm. The catalysed reaction is carbamoyl phosphate + L-ornithine = L-citrulline + phosphate + H(+). The protein operates within amino-acid biosynthesis; L-arginine biosynthesis; L-arginine from L-ornithine and carbamoyl phosphate: step 1/3. Reversibly catalyzes the transfer of the carbamoyl group from carbamoyl phosphate (CP) to the N(epsilon) atom of ornithine (ORN) to produce L-citrulline. The chain is Ornithine carbamoyltransferase from Methanosarcina acetivorans (strain ATCC 35395 / DSM 2834 / JCM 12185 / C2A).